The sequence spans 530 residues: MSNVKKHVSTINPVGEVLDVGSADEVQWSDASDVVVVGWGGAGASAAIEAREQGAEVLVIERFSGGGASVLSGGVVYAGAVPATRRKPASRFTEAMTAYLKHEVNGVVSDETLARFSRDSVTNLNWLEKQGATFASTMPGYKTSYPADGMYLYYSGNEVVPAYGNPQLLKKPPPRGHRVVAKGQSGAMFFAALQKSTLAHGARTLTQARVQRLVREKDSGRVLGVEVMVLPEGDPRTERHKKLDELVAKSACIRRRVPRRVAVNVRRSRARSARSATSVPAKVWCCPLAAISSIRNCWSMRRYKPGWLTGAAGCDGSGLRLGQSVGGIAQDLNNISAWRFITPPSVWPKGLVVNIQGERFCNEQVYGAKLGYEMMEKQGGQAWLIIDSNVRRQAAWQCLFGGLWAFQSMPALALMYKVAIKGKSVDDLAKKLRMDAAVLQLQFDRANAPARGEIEDPLGKSQDMRHEFKGGSLFAIDISISQKMFPLAVLSLGGLKVNEDNGAVIDGAGYDIPGLYAAGVPPLVWLPRVT.

33 to 62 (DVVVVGWGGAGASAAIEAREQGAEVLVIER) contributes to the FAD binding site. A helical transmembrane segment spans residues 395–415 (AWQCLFGGLWAFQSMPALALM).

This sequence belongs to the FAD-dependent oxidoreductase 2 family. FAD serves as cofactor.

The protein localises to the membrane. The enzyme catalyses a 3-oxo-5alpha-steroid + A = a 3-oxo-Delta(4)-steroid + AH2. It catalyses the reaction 5alpha-androstan-3,17-dione + A = androst-4-ene-3,17-dione + AH2. It carries out the reaction 5alpha-androst-1-ene-3,17-dione + A = androsta-1,4-diene-3,17-dione + AH2. Its activity is regulated as follows. Inhibition occurs with substrate concentrations above 25 uM. Functionally, involved in the degradation of steroids having an A:B ring fusion in a trans configuration. Catalyzes the elimination of hydrogens located at positions 4 and 5 and the introduction of double bonds into ring A. In Comamonas testosteroni (Pseudomonas testosteroni), this protein is 3-oxo-5-alpha-steroid 4-dehydrogenase.